A 151-amino-acid polypeptide reads, in one-letter code: Large ribosomal subunit protein uL22 (151 aa).

Over residues 1 to 18 the composition is skewed to polar residues; that stretch reads MARINYSINGDPETTSKA. Positions 1 to 23 are disordered; the sequence is MARINYSINGDPETTSKAMGSEL.

Belongs to the universal ribosomal protein uL22 family. Part of the 50S ribosomal subunit.

Its function is as follows. This protein binds specifically to 23S rRNA. It makes multiple contacts with different domains of the 23S rRNA in the assembled 50S subunit and ribosome. The globular domain of the protein is located near the polypeptide exit tunnel on the outside of the subunit, while an extended beta-hairpin is found that lines the wall of the exit tunnel in the center of the 70S ribosome. This chain is Large ribosomal subunit protein uL22, found in Methanosarcina acetivorans (strain ATCC 35395 / DSM 2834 / JCM 12185 / C2A).